Consider the following 135-residue polypeptide: Putative hydrolase EbsB (135 aa).

Residues 1–128 (MLRIYVDAAT…ADMLARQALQ (128 aa)) enclose the RNase H type-1 domain. Aspartate 7, glutamate 45, aspartate 71, and aspartate 120 together coordinate Mg(2+).

This sequence belongs to the RNase H family. EbsB subfamily. Requires Mg(2+) as cofactor.

It localises to the secreted. Its subcellular location is the cell wall. In terms of biological role, seems to play some role in the cell surface expression of a chromosomally encoded receptor, named enterococcal binding substance (EBS), that mediates mating aggregate formation. Might interfere with the synthesis or assembly of EBS and function as a cell wall hydrolase. This is Putative hydrolase EbsB from Enterococcus faecalis (strain ATCC 700802 / V583).